A 334-amino-acid polypeptide reads, in one-letter code: tRNA dimethylallyltransferase (334 aa).

ATP is bound at residue 23-30 (GPTGAGKT). A substrate-binding site is contributed by 25-30 (TGAGKT). 2 interaction with substrate tRNA regions span residues 53–56 (DSAL) and 177–181 (QRVQR).

It belongs to the IPP transferase family. Monomer. Requires Mg(2+) as cofactor.

The catalysed reaction is adenosine(37) in tRNA + dimethylallyl diphosphate = N(6)-dimethylallyladenosine(37) in tRNA + diphosphate. Catalyzes the transfer of a dimethylallyl group onto the adenine at position 37 in tRNAs that read codons beginning with uridine, leading to the formation of N6-(dimethylallyl)adenosine (i(6)A). The sequence is that of tRNA dimethylallyltransferase from Polynucleobacter necessarius subsp. necessarius (strain STIR1).